Consider the following 217-residue polypeptide: Large ribosomal subunit protein uL3 (217 aa).

Residues 135–154 (ATHGNSLSHRAPGSIGQCQT) are disordered. Gln153 is modified (N5-methylglutamine).

This sequence belongs to the universal ribosomal protein uL3 family. Part of the 50S ribosomal subunit. Forms a cluster with proteins L14 and L19. Methylated by PrmB.

In terms of biological role, one of the primary rRNA binding proteins, it binds directly near the 3'-end of the 23S rRNA, where it nucleates assembly of the 50S subunit. The polypeptide is Large ribosomal subunit protein uL3 (Coxiella burnetii (strain CbuG_Q212) (Coxiella burnetii (strain Q212))).